We begin with the raw amino-acid sequence, 446 residues long: Casein kinase I homolog 1 (446 aa).

Positions 12-274 (YKVGRRIGEG…FDATPDYDYL (263 aa)) constitute a Protein kinase domain. ATP is bound by residues 18–26 (IGEGSFGVI) and K41. The active-site Proton acceptor is the D131. Residues 308–430 (KSRNAETENQ…ETEAPKKKKS (123 aa)) are disordered. Position 329 is a phosphoserine (S329). Polar residues predominate over residues 332–345 (PALQNHASTQNVVS). Positions 346–355 (KRSDYEKPFA) are enriched in basic and acidic residues. Positions 360–397 (NSASDSAEPNQNSLPNPPTETKATTTVPDRSGLATNQP) are enriched in polar residues. Positions 401–412 (DVHDSSEERVTR) are enriched in basic and acidic residues.

It belongs to the protein kinase superfamily. CK1 Ser/Thr protein kinase family. Casein kinase I subfamily.

It localises to the cytoplasm. It catalyses the reaction L-seryl-[protein] + ATP = O-phospho-L-seryl-[protein] + ADP + H(+). The enzyme catalyses L-threonyl-[protein] + ATP = O-phospho-L-threonyl-[protein] + ADP + H(+). Functionally, casein kinases are operationally defined by their preferential utilization of acidic proteins such as caseins as substrates. The protein is Casein kinase I homolog 1 (cki1) of Schizosaccharomyces pombe (strain 972 / ATCC 24843) (Fission yeast).